We begin with the raw amino-acid sequence, 137 residues long: Ribosome-binding factor A (137 aa).

The protein belongs to the RbfA family. In terms of assembly, monomer. Binds 30S ribosomal subunits, but not 50S ribosomal subunits or 70S ribosomes.

It is found in the cytoplasm. Its function is as follows. One of several proteins that assist in the late maturation steps of the functional core of the 30S ribosomal subunit. Associates with free 30S ribosomal subunits (but not with 30S subunits that are part of 70S ribosomes or polysomes). Required for efficient processing of 16S rRNA. May interact with the 5'-terminal helix region of 16S rRNA. The chain is Ribosome-binding factor A from Synechococcus sp. (strain ATCC 27144 / PCC 6301 / SAUG 1402/1) (Anacystis nidulans).